We begin with the raw amino-acid sequence, 190 residues long: Class III hydrophobin F (190 aa).

The signal sequence occupies residues 1–18 (MRPITILCTLATLSTTLA). 4 disulfide bridges follow: C54–C115, C62–C109, C63–C97, and C116–C131.

It belongs to the fungal hydrophobin family. Self-assembles to form functional amyloid fibrils called rodlets. Self-assembly into fibrillar rodlets occurs spontaneously at hydrophobic:hydrophilic interfaces and the rodlets further associate laterally to form amphipathic monolayers.

The protein localises to the secreted. It localises to the cell wall. Functionally, aerial growth, conidiation, and dispersal of filamentous fungi in the environment rely upon a capability of their secreting small amphipathic proteins called hydrophobins (HPBs) with low sequence identity. Class I can self-assemble into an outermost layer of rodlet bundles on aerial cell surfaces, conferring cellular hydrophobicity that supports fungal growth, development and dispersal; whereas Class II form highly ordered films at water-air interfaces through intermolecular interactions but contribute nothing to the rodlet structure. RodF and rodG belong to Class III, which contains hydrophobins with intermediate (between classes I and II) or atypical characteristics. RodF, unlike rodA, is not required for rodlet formation. The polypeptide is Class III hydrophobin F (Aspergillus fumigatus (strain ATCC MYA-4609 / CBS 101355 / FGSC A1100 / Af293) (Neosartorya fumigata)).